The following is a 358-amino-acid chain: Peroxisome biogenesis protein 3-1 (358 aa).

A helical membrane pass occupies residues 15-32 (ILVTTTCLGSGYLLYKLY). Residues 33 to 62 (NAHTRKLADLERELANERENDEIIKTQMKA) are a coiled coil.

Belongs to the peroxin-3 family.

It is found in the peroxisome membrane. In terms of biological role, involved in morphology determination of peroxisomes, but not in import of peroxisomal matrix proteins. May act as a docking factor for PEX19 and be necessary for the import of peroxisomal membrane proteins in the peroxisomes. The protein is Peroxisome biogenesis protein 3-1 (PEX3-1) of Arabidopsis thaliana (Mouse-ear cress).